The primary structure comprises 135 residues: Small ribosomal subunit protein bS16 (135 aa).

The segment at 94–135 is disordered; it reads IGTEMETWQQRNDSRLKRGLDRKAIRRKRKKEAEAKEKESAG. Composition is skewed to basic and acidic residues over residues 105–116 and 124–135; these read NDSRLKRGLDRK and KEAEAKEKESAG.

This sequence belongs to the bacterial ribosomal protein bS16 family.

In Chloroherpeton thalassium (strain ATCC 35110 / GB-78), this protein is Small ribosomal subunit protein bS16.